A 67-amino-acid polypeptide reads, in one-letter code: Prokaryotic ubiquitin-like protein Pup (67 aa).

A compositionally biased stretch (low complexity) spans 1–11 (MAGQEQQQPQS). Residues 1-47 (MAGQEQQQPQSRESEFEDDAPATPPAPGEAQASAATQGVDDLLDEID) form a disordered region. The tract at residues 25-61 (PAPGEAQASAATQGVDDLLDEIDGVLESNAEEFVRAF) is ARC ATPase binding. At Gln67 the chain carries Deamidated glutamine. Residue Gln67 forms an Isoglutamyl lysine isopeptide (Gln-Lys) (interchain with K-? in acceptor proteins) linkage.

Belongs to the prokaryotic ubiquitin-like protein family. Strongly interacts with the proteasome-associated ATPase ARC through a hydrophobic interface; the interacting region of Pup lies in its C-terminal half. There is one Pup binding site per ARC hexamer ring. Is modified by deamidation of its C-terminal glutamine to glutamate by the deamidase Dop, a prerequisite to the subsequent pupylation process.

Its pathway is protein degradation; proteasomal Pup-dependent pathway. Its function is as follows. Protein modifier that is covalently attached to lysine residues of substrate proteins, thereby targeting them for proteasomal degradation. The tagging system is termed pupylation. This is Prokaryotic ubiquitin-like protein Pup from Arthrobacter sp. (strain FB24).